The sequence spans 444 residues: Tubulin beta 8B (444 aa).

Positions 1 to 4 match the MREI motif motif; that stretch reads MREI. GTP is bound by residues Gln11, Glu69, Ser138, Gly142, Thr143, and Gly144. Glu69 contacts Mg(2+). Position 172 is a phosphoserine; by CDK1 (Ser172). GTP is bound by residues Asn204 and Asn226. The disordered stretch occupies residues 421–444; the sequence is EYQQYQDATAEEEEDEEYAEEEVA. Positions 429–444 are enriched in acidic residues; the sequence is TAEEEEDEEYAEEEVA. Position 436 is a 5-glutamyl polyglutamate (Glu436).

This sequence belongs to the tubulin family. Dimer of alpha and beta chains. A typical microtubule is a hollow water-filled tube with an outer diameter of 25 nm and an inner diameter of 15 nM. Alpha-beta heterodimers associate head-to-tail to form protofilaments running lengthwise along the microtubule wall with the beta-tubulin subunit facing the microtubule plus end conferring a structural polarity. Microtubules usually have 13 protofilaments but different protofilament numbers can be found in some organisms and specialized cells. It depends on Mg(2+) as a cofactor. In terms of processing, some glutamate residues at the C-terminus are polyglutamylated, resulting in polyglutamate chains on the gamma-carboxyl group. Polyglutamylation plays a key role in microtubule severing by spastin (SPAST). SPAST preferentially recognizes and acts on microtubules decorated with short polyglutamate tails: severing activity by SPAST increases as the number of glutamates per tubulin rises from one to eight, but decreases beyond this glutamylation threshold. Glutamylation is also involved in cilia motility. Post-translationally, some glutamate residues at the C-terminus are monoglycylated but not polyglycylated due to the absence of functional TTLL10 in human. Monoglycylation is mainly limited to tubulin incorporated into cilia and flagella axonemes, which is required for their stability and maintenance. Flagella glycylation controls sperm motility. Both polyglutamylation and monoglycylation can coexist on the same protein on adjacent residues, and lowering glycylation levels increases polyglutamylation, and reciprocally. Phosphorylated on Ser-172 by CDK1 during the cell cycle, from metaphase to telophase, but not in interphase. This phosphorylation inhibits tubulin incorporation into microtubules.

The protein localises to the cytoplasm. Its subcellular location is the cytoskeleton. Its function is as follows. Tubulin is the major constituent of microtubules, a cylinder consisting of laterally associated linear protofilaments composed of alpha- and beta-tubulin heterodimers. Microtubules grow by the addition of GTP-tubulin dimers to the microtubule end, where a stabilizing cap forms. Below the cap, tubulin dimers are in GDP-bound state, owing to GTPase activity of alpha-tubulin. The sequence is that of Tubulin beta 8B from Homo sapiens (Human).